The following is a 49-amino-acid chain: Large ribosomal subunit protein bL33C (49 aa).

Residues 20 to 49 (NKNKRNNPDRLEKQKYCPRERKVTLHRETK) are disordered. Over residues 25 to 49 (NNPDRLEKQKYCPRERKVTLHRETK) the composition is skewed to basic and acidic residues.

This sequence belongs to the bacterial ribosomal protein bL33 family.

The sequence is that of Large ribosomal subunit protein bL33C (rpmG3) from Enterococcus faecalis (strain ATCC 700802 / V583).